We begin with the raw amino-acid sequence, 167 residues long: Ribosome maturation factor RimM (167 aa).

The region spanning 92 to 166 (DDEFYHADLI…RIVADPPEEQ (75 aa)) is the PRC barrel domain.

The protein belongs to the RimM family. As to quaternary structure, binds ribosomal protein uS19.

Its subcellular location is the cytoplasm. An accessory protein needed during the final step in the assembly of 30S ribosomal subunit, possibly for assembly of the head region. Essential for efficient processing of 16S rRNA. May be needed both before and after RbfA during the maturation of 16S rRNA. It has affinity for free ribosomal 30S subunits but not for 70S ribosomes. This Paracoccus denitrificans (strain Pd 1222) protein is Ribosome maturation factor RimM.